Consider the following 269-residue polypeptide: Ribonuclease HII (269 aa).

Positions 83–269 (YLIAGVDEVG…HRMSFLTNIL (187 aa)) constitute an RNase H type-2 domain. Residues D89, E90, and D185 each contribute to the a divalent metal cation site.

This sequence belongs to the RNase HII family. Mn(2+) is required as a cofactor. The cofactor is Mg(2+).

The protein resides in the cytoplasm. The enzyme catalyses Endonucleolytic cleavage to 5'-phosphomonoester.. Endonuclease that specifically degrades the RNA of RNA-DNA hybrids. The chain is Ribonuclease HII from Clostridium botulinum (strain ATCC 19397 / Type A).